Consider the following 426-residue polypeptide: 3-isopropylmalate dehydratase large subunit (426 aa).

Residues cysteine 307, cysteine 367, and cysteine 370 each contribute to the [4Fe-4S] cluster site.

The protein belongs to the aconitase/IPM isomerase family. LeuC type 2 subfamily. In terms of assembly, heterodimer of LeuC and LeuD. The cofactor is [4Fe-4S] cluster.

The enzyme catalyses (2R,3S)-3-isopropylmalate = (2S)-2-isopropylmalate. It functions in the pathway amino-acid biosynthesis; L-leucine biosynthesis; L-leucine from 3-methyl-2-oxobutanoate: step 2/4. Functionally, catalyzes the isomerization between 2-isopropylmalate and 3-isopropylmalate, via the formation of 2-isopropylmaleate. The chain is 3-isopropylmalate dehydratase large subunit from Sulfurovum sp. (strain NBC37-1).